The following is a 65-amino-acid chain: Dybowskin-2CDYa (65 aa).

Positions Met1 to Cys22 are cleaved as a signal peptide. Residues Glu23 to Arg47 constitute a propeptide that is removed on maturation. The span at Arg26–Glu43 shows a compositional bias: acidic residues. A disordered region spans residues Arg26–His65. A compositionally biased stretch (basic residues) spans Val50–His65.

This sequence belongs to the frog skin active peptide (FSAP) family. Brevinin subfamily. Expressed by the skin glands.

It localises to the secreted. Its function is as follows. Antimicrobial peptide. Has activity against the Gram-positive bacterium S.aureus (MIC=6 uM) and the Gram-negative bacterium E.coli (MIC=3 uM). Lacks hemolytic activity against human erythrocytes. The chain is Dybowskin-2CDYa from Rana dybowskii (Dybovsky's frog).